The following is a 170-amino-acid chain: Viral interleukin-10 homolog (170 aa).

Positions 1 to 23 (MERRLVVTLQCLVLLYLAPECGG) are cleaved as a signal peptide. 2 cysteine pairs are disulfide-bonded: cysteine 27–cysteine 119 and cysteine 73–cysteine 125. The stretch at 97–145 (EAKDHVNSLGENLKTLRLRLRRCHRFLPCENKSKAVEQIKNAFNKLQEK) forms a coiled coil. Asparagine 127 carries N-linked (GlcNAc...) asparagine; by host glycosylation.

Belongs to the IL-10 family. In terms of assembly, homodimer.

The protein localises to the secreted. In terms of biological role, inhibits IFN-gamma synthesis. Down-regulates the expression of the host TAP1 gene (transporter associated with antigen processing), thereby affecting the transport of peptides into the endoplasmic reticulum and subsequent peptide loading by MHC class I molecules. In consequence, infected cells are masked for immune recognition by cytotoxic T-lymphocytes. This is Viral interleukin-10 homolog from Epstein-Barr virus (strain AG876) (HHV-4).